The primary structure comprises 303 residues: Coenzyme PQQ synthesis protein B (303 aa).

Belongs to the PqqB family.

Its pathway is cofactor biosynthesis; pyrroloquinoline quinone biosynthesis. In terms of biological role, may be involved in the transport of PQQ or its precursor to the periplasm. The protein is Coenzyme PQQ synthesis protein B of Acinetobacter baumannii (strain SDF).